Here is a 419-residue protein sequence, read N- to C-terminus: Maltoporin 2 (419 aa).

An N-terminal signal peptide occupies residues 1 to 23 (MKTSLRTLSVALAAALVSPSVLA).

This sequence belongs to the porin LamB (TC 1.B.3) family. Homotrimer formed of three 18-stranded antiparallel beta-barrels, containing three independent channels.

The protein resides in the cell outer membrane. It carries out the reaction beta-maltose(in) = beta-maltose(out). Functionally, involved in the transport of maltose and maltodextrins. In Yersinia pseudotuberculosis serotype O:1b (strain IP 31758), this protein is Maltoporin 2.